The primary structure comprises 564 residues: Septation ring formation regulator EzrA (564 aa).

The Extracellular segment spans residues 1–4; sequence MVLY. Residues 5 to 23 form a helical membrane-spanning segment; it reads IILAIIVIILIAVGVLFYL. The Cytoplasmic segment spans residues 24 to 564; that stretch reads RSNKRQIIEK…KHIEEEVIKQ (541 aa). Coiled coils occupy residues 99-138, 190-223, 271-300, 350-435, and 471-550; these read SFNA…YKDN, DGNY…LIRE, LISR…LIEH, VRQF…RRLL, and VKQL…ESVE.

It belongs to the EzrA family.

It is found in the cell membrane. Its function is as follows. Negative regulator of FtsZ ring formation; modulates the frequency and position of FtsZ ring formation. Inhibits FtsZ ring formation at polar sites. Interacts either with FtsZ or with one of its binding partners to promote depolymerization. The chain is Septation ring formation regulator EzrA from Staphylococcus aureus (strain JH1).